Here is a 160-residue protein sequence, read N- to C-terminus: Prorelaxin (160 aa).

Cystine bridges form between C10–C147, C22–C160, and C146–C151. Positions 34–133 (QEKQRILGSG…KDFNLNIYSP (100 aa)) are cleaved as a propeptide — connecting peptide.

It belongs to the insulin family. In terms of assembly, heterodimer of a B chain and an A chain linked by two disulfide bonds. As to expression, expressed in the endometrium during pregnancy and in mammary gland during lactation.

The protein resides in the secreted. Functionally, relaxin is an ovarian hormone that acts with estrogen to produce dilatation of the birth canal in many mammals. It bears mature young, and allows separation of the pelvic bones. In Cavia porcellus (Guinea pig), this protein is Prorelaxin (RLN).